The following is a 740-amino-acid chain: Protein SIEVE ELEMENT OCCLUSION B (740 aa).

Residues 1 to 23 are compositionally biased toward polar residues; the sequence is MESLIKSQHAQQLAGHKNTTGKT. Residues 1-27 form a disordered region; that stretch reads MESLIKSQHAQQLAGHKNTTGKTPSME.

Can form homodimer. In terms of tissue distribution, expressed in phloem sieve elements.

Its function is as follows. Scaffold protein required to form the phloem filament matrix in sieve elements. The polypeptide is Protein SIEVE ELEMENT OCCLUSION B (Arabidopsis thaliana (Mouse-ear cress)).